A 71-amino-acid polypeptide reads, in one-letter code: uncharacterized protein (71 aa).

This is an uncharacterized protein from Thermoproteus tenax virus 1 (strain KRA1) (TTV1).